The following is a 206-amino-acid chain: Homoserine/homoserine lactone efflux protein (206 aa).

6 consecutive transmembrane segments (helical) span residues 5-25, 45-65, 68-88, 117-137, 148-168, and 182-202; these read WWFAYLLTSTLLSLSPGSGAI, GLQTGLGIHIVLVGVGLGTLF, SLIAFEILKWAGAAYLIWLGI, FVNLTNPKSIVFLAALFPQFI, LILGVTTIVVDMIVMTGYATL, and MKALNKAFGSLFMLVGALLAS.

This sequence belongs to the Rht family.

Its subcellular location is the cell membrane. Its function is as follows. Conducts the efflux of homoserine and homoserine lactone. The protein is Homoserine/homoserine lactone efflux protein (rhtB) of Salmonella typhi.